Here is a 239-residue protein sequence, read N- to C-terminus: Putative GEM-like protein 3 (239 aa).

Positions 29 to 68 are disordered; it reads HWNPELVSESPAPDEKALSSSSAARSNPYVARAPTETSDA. The GRAM domain occupies 128-191; sequence KIFRQTFETV…HQLKSVNPSI (64 aa).

It belongs to the GEM family.

The chain is Putative GEM-like protein 3 from Arabidopsis thaliana (Mouse-ear cress).